Consider the following 519-residue polypeptide: Arabinose import ATP-binding protein AraG 2 (519 aa).

2 consecutive ABC transporter domains span residues 29–264 and 264–515; these read LSLD…MVGR and RSIE…LIKL. ATP is bound at residue 61–68; the sequence is GENGAGKS.

The protein belongs to the ABC transporter superfamily. Arabinose importer (TC 3.A.1.2.2) family. As to quaternary structure, the complex is composed of two ATP-binding proteins (AraG), two transmembrane proteins (AraH) and a solute-binding protein (AraF).

It is found in the cell inner membrane. The enzyme catalyses L-arabinose(out) + ATP + H2O = L-arabinose(in) + ADP + phosphate + H(+). Part of the ABC transporter complex AraFGH involved in arabinose import. Responsible for energy coupling to the transport system. The chain is Arabinose import ATP-binding protein AraG 2 from Burkholderia ambifaria (strain ATCC BAA-244 / DSM 16087 / CCUG 44356 / LMG 19182 / AMMD) (Burkholderia cepacia (strain AMMD)).